The primary structure comprises 274 residues: 2,3,4,5-tetrahydropyridine-2,6-dicarboxylate N-succinyltransferase (274 aa).

Arg-104 and Asp-141 together coordinate substrate.

It belongs to the transferase hexapeptide repeat family. As to quaternary structure, homotrimer.

Its subcellular location is the cytoplasm. It catalyses the reaction (S)-2,3,4,5-tetrahydrodipicolinate + succinyl-CoA + H2O = (S)-2-succinylamino-6-oxoheptanedioate + CoA. It functions in the pathway amino-acid biosynthesis; L-lysine biosynthesis via DAP pathway; LL-2,6-diaminopimelate from (S)-tetrahydrodipicolinate (succinylase route): step 1/3. In Escherichia coli O127:H6 (strain E2348/69 / EPEC), this protein is 2,3,4,5-tetrahydropyridine-2,6-dicarboxylate N-succinyltransferase.